Here is a 413-residue protein sequence, read N- to C-terminus: Arginine biosynthesis bifunctional protein ArgJ (413 aa).

Substrate-binding residues include threonine 158, lysine 184, threonine 195, glutamate 285, asparagine 408, and serine 413. The Nucleophile role is filled by threonine 195.

The protein belongs to the ArgJ family. In terms of assembly, heterotetramer of two alpha and two beta chains.

It is found in the cytoplasm. The enzyme catalyses N(2)-acetyl-L-ornithine + L-glutamate = N-acetyl-L-glutamate + L-ornithine. The catalysed reaction is L-glutamate + acetyl-CoA = N-acetyl-L-glutamate + CoA + H(+). The protein operates within amino-acid biosynthesis; L-arginine biosynthesis; L-ornithine and N-acetyl-L-glutamate from L-glutamate and N(2)-acetyl-L-ornithine (cyclic): step 1/1. It functions in the pathway amino-acid biosynthesis; L-arginine biosynthesis; N(2)-acetyl-L-ornithine from L-glutamate: step 1/4. Catalyzes two activities which are involved in the cyclic version of arginine biosynthesis: the synthesis of N-acetylglutamate from glutamate and acetyl-CoA as the acetyl donor, and of ornithine by transacetylation between N(2)-acetylornithine and glutamate. The polypeptide is Arginine biosynthesis bifunctional protein ArgJ (Rhizobium meliloti (strain 1021) (Ensifer meliloti)).